We begin with the raw amino-acid sequence, 251 residues long: Pyrroloquinoline-quinone synthase (251 aa).

This sequence belongs to the PqqC family.

It catalyses the reaction 6-(2-amino-2-carboxyethyl)-7,8-dioxo-1,2,3,4,7,8-hexahydroquinoline-2,4-dicarboxylate + 3 O2 = pyrroloquinoline quinone + 2 H2O2 + 2 H2O + H(+). It participates in cofactor biosynthesis; pyrroloquinoline quinone biosynthesis. Functionally, ring cyclization and eight-electron oxidation of 3a-(2-amino-2-carboxyethyl)-4,5-dioxo-4,5,6,7,8,9-hexahydroquinoline-7,9-dicarboxylic-acid to PQQ. In Pseudomonas savastanoi pv. phaseolicola (strain 1448A / Race 6) (Pseudomonas syringae pv. phaseolicola (strain 1448A / Race 6)), this protein is Pyrroloquinoline-quinone synthase.